Consider the following 34-residue polypeptide: Conotoxin Cl6d (34 aa).

3 disulfide bridges follow: Cys-4–Cys-19, Cys-12–Cys-29, and Cys-18–Cys-33. Pro-14 and Pro-21 each carry 4-hydroxyproline.

Expressed by the venom duct.

Its subcellular location is the secreted. The chain is Conotoxin Cl6d from Californiconus californicus (California cone).